The sequence spans 168 residues: Oocyte-secreted protein 2 (168 aa).

An N-terminal signal peptide occupies residues 1–21; it reads MGVSMALEVLVYLAVLVWTCA.

This sequence belongs to the PLAC1 family. In terms of tissue distribution, expressed in ovaries. Highly expressed in the germinal vesicles oocytes and metaphase II oocytes.

The protein localises to the secreted. Its subcellular location is the cytoplasm. This is Oocyte-secreted protein 2 (Oosp2) from Mus musculus (Mouse).